Reading from the N-terminus, the 75-residue chain is MITREMIDRINFLYHKSQTEGLTEEEKEEQKRLRQEYVKEIKERVRRELESIKYANNSCEHCGHDHHHHHHHHRH.

It belongs to the UPF0291 family.

The protein resides in the cytoplasm. This is UPF0291 protein Teth39_0326 from Thermoanaerobacter pseudethanolicus (strain ATCC 33223 / 39E) (Clostridium thermohydrosulfuricum).